A 159-amino-acid polypeptide reads, in one-letter code: Ribosomal RNA large subunit methyltransferase H (159 aa).

S-adenosyl-L-methionine-binding positions include Leu76, Gly108, and 127-132; that span reads FGLLTL.

The protein belongs to the RNA methyltransferase RlmH family. In terms of assembly, homodimer.

The protein resides in the cytoplasm. The enzyme catalyses pseudouridine(1915) in 23S rRNA + S-adenosyl-L-methionine = N(3)-methylpseudouridine(1915) in 23S rRNA + S-adenosyl-L-homocysteine + H(+). Its function is as follows. Specifically methylates the pseudouridine at position 1915 (m3Psi1915) in 23S rRNA. The polypeptide is Ribosomal RNA large subunit methyltransferase H (Streptococcus pyogenes serotype M18 (strain MGAS8232)).